Consider the following 186-residue polypeptide: TATA-box-binding protein B (186 aa).

A run of 2 repeats spans residues 10–86 and 101–179.

It belongs to the TBP family.

Its function is as follows. General factor that plays a role in the activation of archaeal genes transcribed by RNA polymerase. Binds specifically to the TATA box promoter element which lies close to the position of transcription initiation. The protein is TATA-box-binding protein B (tbpB1) of Halobacterium salinarum (strain ATCC 700922 / JCM 11081 / NRC-1) (Halobacterium halobium).